The following is a 203-amino-acid chain: MARFRGSITKVSRRLGIALSPKAEKYLERRPFAPGQHGQSRKGKISEYALQLREKQKMKYLYGVLENQFRSYYRKAVSQRGVTGDNLVKLLERRFDNVVFRSGFAASRSAARQLVTHGHLTINGKKVNIPSYLLTPGELIEFRQKSKNMGAVTDSLNKAPDARIPSWIQVDKANQKAVFLSVPEREEVQEPFNEQLVVELYSK.

An S4 RNA-binding domain is found at 93 to 173 (RRFDNVVFRS…IPSWIQVDKA (81 aa)).

Belongs to the universal ribosomal protein uS4 family. Part of the 30S ribosomal subunit. Contacts protein S5. The interaction surface between S4 and S5 is involved in control of translational fidelity.

Functionally, one of the primary rRNA binding proteins, it binds directly to 16S rRNA where it nucleates assembly of the body of the 30S subunit. Its function is as follows. With S5 and S12 plays an important role in translational accuracy. In Chlorobium phaeobacteroides (strain DSM 266 / SMG 266 / 2430), this protein is Small ribosomal subunit protein uS4.